The sequence spans 315 residues: Aspartate carbamoyltransferase catalytic subunit (315 aa).

The carbamoyl phosphate site is built by arginine 64 and threonine 65. Lysine 92 is an L-aspartate binding site. Carbamoyl phosphate is bound by residues arginine 114, histidine 142, and glutamine 145. Positions 175 and 229 each coordinate L-aspartate. The carbamoyl phosphate site is built by glycine 270 and proline 271.

The protein belongs to the aspartate/ornithine carbamoyltransferase superfamily. ATCase family. In terms of assembly, heterododecamer (2C3:3R2) of six catalytic PyrB chains organized as two trimers (C3), and six regulatory PyrI chains organized as three dimers (R2).

It carries out the reaction carbamoyl phosphate + L-aspartate = N-carbamoyl-L-aspartate + phosphate + H(+). The protein operates within pyrimidine metabolism; UMP biosynthesis via de novo pathway; (S)-dihydroorotate from bicarbonate: step 2/3. In terms of biological role, catalyzes the condensation of carbamoyl phosphate and aspartate to form carbamoyl aspartate and inorganic phosphate, the committed step in the de novo pyrimidine nucleotide biosynthesis pathway. This Methylorubrum populi (strain ATCC BAA-705 / NCIMB 13946 / BJ001) (Methylobacterium populi) protein is Aspartate carbamoyltransferase catalytic subunit.